The primary structure comprises 35 residues: GGCLPHNRFCNALSGPRCCSGLKCKELSIWDSRCL.

3 disulfides stabilise this stretch: Cys-3-Cys-19, Cys-10-Cys-24, and Cys-18-Cys-34. A Leucine amide modification is found at Leu-35.

The protein belongs to the neurotoxin 01 (U2-agtx) family. As to expression, expressed by the venom gland.

It is found in the secreted. In terms of biological role, insect-selective toxin causing rapid but reversible paralysis in crickets. Suppresses the excitatory postsynaptic potentials evoked in lobster neuromuscular synaptic preparations, possibly by blocking the presynaptic calcium channel (Cav). Induces instantaneous reversible paralysis when injected into crickets. The sequence is that of U2-agatoxin-Aop1a from Allagelena opulenta (Funnel weaving spider).